The sequence spans 166 residues: Bacterial non-heme ferritin (166 aa).

One can recognise a Ferritin-like diiron domain in the interval 2 to 145; it reads LSKELLAALN…THIDYLTRIG (144 aa). Positions 17, 50, 53, 94, and 127 each coordinate Fe cation.

The protein belongs to the ferritin family. Prokaryotic subfamily.

Its subcellular location is the cytoplasm. It catalyses the reaction 4 Fe(2+) + O2 + 6 H2O = 4 iron(III) oxide-hydroxide + 12 H(+). Iron-storage protein. The polypeptide is Bacterial non-heme ferritin (ftnA) (Staphylococcus epidermidis (strain ATCC 12228 / FDA PCI 1200)).